A 299-amino-acid polypeptide reads, in one-letter code: Bifunctional protein FolD (299 aa).

Residues 169-171 (GRS), serine 194, and isoleucine 235 contribute to the NADP(+) site.

Belongs to the tetrahydrofolate dehydrogenase/cyclohydrolase family. In terms of assembly, homodimer.

It carries out the reaction (6R)-5,10-methylene-5,6,7,8-tetrahydrofolate + NADP(+) = (6R)-5,10-methenyltetrahydrofolate + NADPH. The enzyme catalyses (6R)-5,10-methenyltetrahydrofolate + H2O = (6R)-10-formyltetrahydrofolate + H(+). Its pathway is one-carbon metabolism; tetrahydrofolate interconversion. Its function is as follows. Catalyzes the oxidation of 5,10-methylenetetrahydrofolate to 5,10-methenyltetrahydrofolate and then the hydrolysis of 5,10-methenyltetrahydrofolate to 10-formyltetrahydrofolate. This Nostoc sp. (strain PCC 7120 / SAG 25.82 / UTEX 2576) protein is Bifunctional protein FolD.